The primary structure comprises 306 residues: Glutamyl-Q tRNA(Asp) synthetase (306 aa).

L-glutamate-binding positions include arginine 29 to serine 33 and aspartate 65. Residues proline 32–asparagine 42 carry the 'HIGH' region motif. Zn(2+)-binding residues include cysteine 121, cysteine 123, tyrosine 141, and cysteine 145. L-glutamate-binding residues include tyrosine 188 and arginine 206. Positions lysine 244–arginine 248 match the 'KMSKS' region motif. Lysine 247 lines the ATP pocket.

The protein belongs to the class-I aminoacyl-tRNA synthetase family. GluQ subfamily. Zn(2+) is required as a cofactor.

Its function is as follows. Catalyzes the tRNA-independent activation of glutamate in presence of ATP and the subsequent transfer of glutamate onto a tRNA(Asp). Glutamate is transferred on the 2-amino-5-(4,5-dihydroxy-2-cyclopenten-1-yl) moiety of the queuosine in the wobble position of the QUC anticodon. The chain is Glutamyl-Q tRNA(Asp) synthetase from Prochlorococcus marinus (strain MIT 9303).